Consider the following 1465-residue polypeptide: Transcriptional elongation regulator MINIYO (1465 aa).

Disordered regions lie at residues 27–85 (KGIS…AEER), 186–211 (LNAS…ESDI), and 1113–1135 (TIHE…SSTI).

The protein belongs to the RPAP1 family. In terms of assembly, interacts with HAG3, NRPB3 and NRPB10L. As to expression, expressed in root and shoot apices and in leaf and flower primordia. Detected in the endosperm, embryo, meristems and in organ primordia, but not in mature cells. Found exclusively in the vascular bundles in mature leaves.

The protein resides in the cytoplasm. Its subcellular location is the nucleus. Its function is as follows. Positive regulator of transcriptional elongation that is essential for cells to initiate differentiation. Interacts with RNA polymerase II and the Elongator complex and is required to sustain global levels of transcriptional elongation activity, specifically in differentiating tissues. The polypeptide is Transcriptional elongation regulator MINIYO (Arabidopsis thaliana (Mouse-ear cress)).